We begin with the raw amino-acid sequence, 152 residues long: Lipoprotein signal peptidase (152 aa).

A run of 2 helical transmembrane segments spans residues 55–75 (NKMWFFYIITVVFVVFIVFYM) and 85–105 (LGISLGLILGGAIGNFIDRVF). Catalysis depends on residues aspartate 111 and aspartate 129. The helical transmembrane segment at 124–144 (VFNIADSALCIGVVLIIIQTL) threads the bilayer.

The protein belongs to the peptidase A8 family.

It localises to the cell membrane. It catalyses the reaction Release of signal peptides from bacterial membrane prolipoproteins. Hydrolyzes -Xaa-Yaa-Zaa-|-(S,diacylglyceryl)Cys-, in which Xaa is hydrophobic (preferably Leu), and Yaa (Ala or Ser) and Zaa (Gly or Ala) have small, neutral side chains.. It functions in the pathway protein modification; lipoprotein biosynthesis (signal peptide cleavage). This protein specifically catalyzes the removal of signal peptides from prolipoproteins. This Bacillus cereus (strain ZK / E33L) protein is Lipoprotein signal peptidase.